The chain runs to 543 residues: MALLPRLAAGGLLLLLALAALEGKPAPSALSQLLEKRSEDQAAAGRIIDGGDTKQAARDPSPQRNVEPLCSCKDMSDKECLNFCHQDVIWRDTKQAARDPSPQRNVEPLCTCNDMTDEECLNFCHQDVIWRDTKQAARDPSPQRNVEPLCSCKDMTDKECLYFCHQDVIWRDTKQAARDPSPQRNVEPLCTCNDMTDEECLNFCHQDVIWRDTKQAARDPSPQRNVEPLCTCNDMTDEECLNFCHQDVIWRDTKQAARDPSPQRNVEPLCTCKDMTDKECLYFCHQGIIWRDTKQAARDPSPQRNVEPLCSCKDMSDKECLNFCHQDVIWRDTKQAARDPSPQRNVEPLCTCNDMTDEECLNFCHQDVIWRDTKQAARDPSPQRNVEPLCTCNDMTDEECLNFCHQDVIWRDTKQAARDPSPQRNVEPLCSCKDMTDKECLYFCHQDVIWRDTKQAARDPSPQRNVEPLCSCKDMSDKECLNFCHQDVIWRDTKQAARDPSPQRNVEPLCSCKDMTDKECLNFCHQDVIWKNADTSANPEFLG.

An N-terminal signal peptide occupies residues 1–23 (MALLPRLAAGGLLLLLALAALEG). The propeptide occupies 24–69 (KPAPSALSQLLEKRSEDQAAAGRIIDGGDTKQAARDPSPQRNVEPL). The interval 45–65 (GRIIDGGDTKQAARDPSPQRN) is disordered. Repeat copies occupy residues 51–90 (GDTK…DVIW), 91–130 (RDTK…DVIW), 131–170 (RDTK…DVIW), 171–210 (RDTK…DVIW), 211–250 (RDTK…DVIW), 251–290 (RDTK…GIIW), 291–330 (RDTK…DVIW), 331–370 (RDTK…DVIW), 371–410 (RDTK…DVIW), 411–450 (RDTK…DVIW), 451–490 (RDTK…DVIW), and 491–530 (RDTK…DVIW). A 12 X 40 AA tandem repeats region spans residues 51–530 (GDTKQAARDP…LNFCHQDVIW (480 aa)). Disulfide bonds link Cys-70–Cys-84 and Cys-72–Cys-80. Positions 92–109 (DTKQAARDPSPQRNVEPL) are excised as a propeptide. Cystine bridges form between Cys-110-Cys-124 and Cys-112-Cys-120. A propeptide spanning residues 132–149 (DTKQAARDPSPQRNVEPL) is cleaved from the precursor. Cystine bridges form between Cys-150/Cys-164 and Cys-152/Cys-160. The propeptide occupies 172–189 (DTKQAARDPSPQRNVEPL). 2 disulfide bridges follow: Cys-190/Cys-204 and Cys-192/Cys-200. A propeptide spanning residues 212 to 229 (DTKQAARDPSPQRNVEPL) is cleaved from the precursor. Disulfide bonds link Cys-230–Cys-244 and Cys-232–Cys-240. Positions 252–269 (DTKQAARDPSPQRNVEPL) are excised as a propeptide. 2 disulfides stabilise this stretch: Cys-270–Cys-284 and Cys-272–Cys-280. Residues 292–309 (DTKQAARDPSPQRNVEPL) constitute a propeptide that is removed on maturation. 2 cysteine pairs are disulfide-bonded: Cys-310–Cys-324 and Cys-312–Cys-320. The propeptide occupies 332–349 (DTKQAARDPSPQRNVEPL). 2 disulfides stabilise this stretch: Cys-350/Cys-364 and Cys-352/Cys-360. The propeptide occupies 372–389 (DTKQAARDPSPQRNVEPL). Intrachain disulfides connect Cys-390/Cys-404 and Cys-392/Cys-400. Residues 412–429 (DTKQAARDPSPQRNVEPL) constitute a propeptide that is removed on maturation. Cystine bridges form between Cys-430–Cys-444 and Cys-432–Cys-440. A propeptide spanning residues 452 to 469 (DTKQAARDPSPQRNVEPL) is cleaved from the precursor. Disulfide bonds link Cys-470/Cys-484 and Cys-472/Cys-480. Positions 492 to 509 (DTKQAARDPSPQRNVEPL) are excised as a propeptide. 2 disulfides stabilise this stretch: Cys-510/Cys-524 and Cys-512/Cys-520. A propeptide spanning residues 532 to 543 (NADTSANPEFLG) is cleaved from the precursor.

This sequence belongs to the endothelin/sarafotoxin family. Expressed by the venom gland.

The protein resides in the secreted. Its function is as follows. Vasoconstrictor activity. These toxins cause cardiac arrest probably as a result of coronary vasospasm. In terms of biological role, vasoconstrictor activity. Causes cardiac arrest probably as a result of coronary vasospasm. Displays high agonistic activities towards endothelin-2 receptor (EDNRB) (displays affinity in the picomolar range) and endothelin-1 receptor (EDNRA) (lower affinities). The protein is Sarafotoxin of Atractaspis engaddensis (Israeli burrowing asp).